Consider the following 213-residue polypeptide: Pyrrolidone-carboxylate peptidase (213 aa).

Catalysis depends on residues glutamate 78, cysteine 141, and histidine 165.

The protein belongs to the peptidase C15 family. As to quaternary structure, homotetramer.

Its subcellular location is the cytoplasm. It catalyses the reaction Release of an N-terminal pyroglutamyl group from a polypeptide, the second amino acid generally not being Pro.. Functionally, removes 5-oxoproline from various penultimate amino acid residues except L-proline. The protein is Pyrrolidone-carboxylate peptidase of Alkaliphilus oremlandii (strain OhILAs) (Clostridium oremlandii (strain OhILAs)).